The primary structure comprises 505 residues: Putative heat shock protein HSP 90-beta 4 (505 aa).

ATP contacts are provided by asparagine 22, lysine 83, and phenylalanine 109. The interval 197-248 (EKEISDDEEEKGEKEEEDKDDKEKPKTEDVGSDEEDDTDKNNKKKTKKIKEK) is disordered. Residues 200–216 (ISDDEEEKGEKEEEDKD) are compositionally biased toward acidic residues.

This sequence belongs to the heat shock protein 90 family. As to quaternary structure, homodimer.

It localises to the cytoplasm. In terms of biological role, putative molecular chaperone that may promote the maturation, structural maintenance and proper regulation of specific target proteins. The polypeptide is Putative heat shock protein HSP 90-beta 4 (HSP90AB4P) (Homo sapiens (Human)).